We begin with the raw amino-acid sequence, 784 residues long: Lon protease (784 aa).

The region spanning 6 to 207 (LPLMALRDMV…TVITTLTSNI (202 aa)) is the Lon N-terminal domain. 356-363 (GPPGVGKT) serves as a coordination point for ATP. Positions 592–773 (EDQIGSTTGL…DQVLKHALVE (182 aa)) constitute a Lon proteolytic domain. Residues Ser679 and Lys722 contribute to the active site.

Belongs to the peptidase S16 family. As to quaternary structure, homohexamer. Organized in a ring with a central cavity.

It localises to the cytoplasm. It catalyses the reaction Hydrolysis of proteins in presence of ATP.. Functionally, ATP-dependent serine protease that mediates the selective degradation of mutant and abnormal proteins as well as certain short-lived regulatory proteins. Required for cellular homeostasis and for survival from DNA damage and developmental changes induced by stress. Degrades polypeptides processively to yield small peptide fragments that are 5 to 10 amino acids long. Binds to DNA in a double-stranded, site-specific manner. This Rickettsia prowazekii (strain Madrid E) protein is Lon protease.